The chain runs to 250 residues: Hydroxyethylthiazole kinase (250 aa).

Met39 contributes to the substrate binding site. Arg114 and Thr159 together coordinate ATP. Gly186 provides a ligand contact to substrate.

This sequence belongs to the Thz kinase family. It depends on Mg(2+) as a cofactor.

It carries out the reaction 5-(2-hydroxyethyl)-4-methylthiazole + ATP = 4-methyl-5-(2-phosphooxyethyl)-thiazole + ADP + H(+). The protein operates within cofactor biosynthesis; thiamine diphosphate biosynthesis; 4-methyl-5-(2-phosphoethyl)-thiazole from 5-(2-hydroxyethyl)-4-methylthiazole: step 1/1. Its function is as follows. Catalyzes the phosphorylation of the hydroxyl group of 4-methyl-5-beta-hydroxyethylthiazole (THZ). The protein is Hydroxyethylthiazole kinase of Lactococcus lactis subsp. lactis (strain IL1403) (Streptococcus lactis).